Consider the following 53-residue polypeptide: Conotoxin-like peptide 1 (53 aa).

The first 18 residues, 1 to 18 (MGVKSALFIMAVFAAANV), serve as a signal peptide directing secretion. Intrachain disulfides connect cysteine 25/cysteine 39, cysteine 32/cysteine 43, and cysteine 38/cysteine 50.

Its subcellular location is the secreted. This chain is Conotoxin-like peptide 1 (CTL-1), found in Orgyia pseudotsugata multicapsid polyhedrosis virus (OpMNPV).